Consider the following 274-residue polypeptide: Rhamnulose-1-phosphate aldolase (274 aa).

The active site involves Glu-117. Residues His-141, His-143, and His-212 each contribute to the Zn(2+) site.

It belongs to the aldolase class II family. RhaD subfamily. As to quaternary structure, homotetramer. Zn(2+) is required as a cofactor.

Its subcellular location is the cytoplasm. The catalysed reaction is L-rhamnulose 1-phosphate = (S)-lactaldehyde + dihydroxyacetone phosphate. It participates in carbohydrate degradation; L-rhamnose degradation; glycerone phosphate from L-rhamnose: step 3/3. Its function is as follows. Catalyzes the reversible cleavage of L-rhamnulose-1-phosphate to dihydroxyacetone phosphate (DHAP) and L-lactaldehyde. The chain is Rhamnulose-1-phosphate aldolase from Escherichia coli O81 (strain ED1a).